A 352-amino-acid polypeptide reads, in one-letter code: MVTPCPASPGSPAAGAGRRDSHQNLRAPVKKSRRPCLRRKKPLRPLNACSLPGDSGVCDLFESPSSSSDGADSPAVSAARDCSSLLNPAQPLTALDLQTFREYGQSCYDFRKAQENLFHPRESLARQPQVTAESRCKLLSWLLQVHRQFGLSFESLCLTVNTLDRFLLTTPVAADCFQLLGVTCLLIACKQVEVHPPRLKQLLALCGGAFSRQQLCNLECIVLHKLHFSLGAPTINFFLEHFTQWRMEAGQAEVTEALEAQTLARGVAELSLTDYAFTTYTPSLMAICCLALADGLLQHQHEMDLRLGEHPEATLQDCLGKLQTLVSINSSSLPRILPPQIWERCSLPQSWQ.

The disordered stretch occupies residues 1–40 (MVTPCPASPGSPAAGAGRRDSHQNLRAPVKKSRRPCLRRK). A compositionally biased stretch (basic residues) spans 28-40 (PVKKSRRPCLRRK). S83 is modified (phosphoserine).

It belongs to the cyclin family. As to expression, present in respiratory cells (at protein level). Expressed in multiciliated tissue in brain and fallopian tube (at protein level). Highly expressed in oocytes.

It is found in the cytoplasm. Its subcellular location is the nucleus. The protein resides in the nucleolus. Its function is as follows. Specifically required for generation of multiciliated cells, possibly by promoting a cell cycle state compatible with centriole amplification and maturation. Acts downstream of MCIDAS to promote mother centriole amplification and maturation in preparation for apical docking. May be involved in apoptosis in lymphoid cells; however, this result requires additional evidences in vivo. May be involved in oocyte meiotic resumption in oocytes. This is Cyclin-O from Mus musculus (Mouse).